Reading from the N-terminus, the 307-residue chain is MDHFIKLLPKLTPHLRKGDCGKMGVIGGSLEYTGAPYFAASSASRLGADLIHIFCDPDAAQVIKGYSPDLIVHPGMTANSIIPKLSRMDAIVIGPGLGRNPNIWPLMQELFEFVRNRDVPFVIDGDGLWFVSEHIEKFPRQMSATVLTPNIVEFSRLCKSALGEEDVLNVRNNSQLQHLAAELSRKMNVTIYLKGEVDLVVTPNGEVSKCSTESSLRRCGGQGDVTAGSLGLFLYWAKKNLGDDWTSAHHEAGIASSWLVRTAGRRAFEKHGRSMNTPLLLDEIPKLVRDVETREMKDTVHTDSSKH.

The region spanning 1–291 (MDHFIKLLPK…DEIPKLVRDV (291 aa)) is the YjeF C-terminal domain. Residues Gly96 and 150–156 (NIVEFSR) each bind (6S)-NADPHX. ATP is bound by residues 194 to 198 (KGEVD) and 214 to 223 (SSLRRCGGQG). Asp224 is a (6S)-NADPHX binding site.

The protein belongs to the NnrD/CARKD family. It depends on Mg(2+) as a cofactor.

The enzyme catalyses (6S)-NADHX + ATP = ADP + phosphate + NADH + H(+). It carries out the reaction (6S)-NADPHX + ATP = ADP + phosphate + NADPH + H(+). Its function is as follows. Catalyzes the dehydration of the S-form of NAD(P)HX at the expense of ATP, which is converted to ADP. Together with NAD(P)HX epimerase, which catalyzes the epimerization of the S- and R-forms, the enzyme allows the repair of both epimers of NAD(P)HX, a damaged form of NAD(P)H that is a result of enzymatic or heat-dependent hydration. In Caenorhabditis elegans, this protein is ATP-dependent (S)-NAD(P)H-hydrate dehydratase.